The sequence spans 386 residues: Ribosomal RNA small subunit methyltransferase H (386 aa).

Residues 97 to 99, D116, Y143, D167, and Q174 contribute to the S-adenosyl-L-methionine site; that span reads GGH.

Belongs to the methyltransferase superfamily. RsmH family.

The protein resides in the cytoplasm. It catalyses the reaction cytidine(1402) in 16S rRNA + S-adenosyl-L-methionine = N(4)-methylcytidine(1402) in 16S rRNA + S-adenosyl-L-homocysteine + H(+). Functionally, specifically methylates the N4 position of cytidine in position 1402 (C1402) of 16S rRNA. This chain is Ribosomal RNA small subunit methyltransferase H, found in Mycolicibacterium paratuberculosis (strain ATCC BAA-968 / K-10) (Mycobacterium paratuberculosis).